A 29-amino-acid chain; its full sequence is Brevinin-2Ed (29 aa).

The cysteines at positions 23 and 29 are disulfide-linked.

This sequence belongs to the frog skin active peptide (FSAP) family. Brevinin subfamily. In terms of tissue distribution, expressed by the skin glands.

The protein resides in the secreted. Shows antibacterial activity against representative Gram-negative and Gram-positive bacterial species, and hemolytic activity. This is Brevinin-2Ed from Pelophylax lessonae (Pool frog).